Consider the following 574-residue polypeptide: MDKYDKIIDLTKRRGFLWNSFEIYGGIAGFFDYGPLGAILKNNVINTWRKHYIVNEGFYEIDSPTVTPYEVLKASGHVENFTDPLVECKGCLESFRADHIIEENVDVDTEGKTLQELQEMIEKNNIKCPKCGGEFKDVSTFNLMFATSIGPGGKRAAFMRPETAQGIFIQFKRISQFFRNKLPFGAVQIGKAYRNEISPRQGVIRLREFTQAEGEFFIDSRKKENFEKFESVKDTVLPLLSGKNQENESLSAEEKIVRMSLSDAVKNGIIAHEAIAYYIAVTKKFLMEIGIDESKLRFRQHLPNEMAHYAADCWDAELYTDRYGWIECVGIADRTNYDLLAHMKNSGEDLSVFVELDEEHEIEAYEIELNYKLVGRTFKGDAKVLEESLKELDDKKMEELVEALETEGKYTLKTCKRDFELLKEYLTAKKVKKIVKGEKIIPHVIEPSYGIDRITYCVMEHAFKEEEDRTVMGFSNAVSPIKVGVFPLVNKEGMPEIAMDLKNKLRENGLIAEYDDSGAIGRRYMRMDEVGTPFCITIDGETLVDNSVTIRERDSRAQFRIPINEVVSYIKDKL.

Substrate is bound by residues R96 and E162. Residues R194–E196, I204–F209, E327–C328, and G450–R453 each bind ATP. F209 to E213 lines the substrate pocket. E446–G450 provides a ligand contact to substrate.

This sequence belongs to the class-II aminoacyl-tRNA synthetase family.

It localises to the cytoplasm. It catalyses the reaction tRNA(Gly) + glycine + ATP = glycyl-tRNA(Gly) + AMP + diphosphate. Its function is as follows. Catalyzes the attachment of glycine to tRNA(Gly). The sequence is that of Glycine--tRNA ligase from Methanococcus maripaludis (strain C6 / ATCC BAA-1332).